A 400-amino-acid polypeptide reads, in one-letter code: MLEFFSRLSLVTKIIIAIILGIGVALLFPTVTPYLSLFGELFIKALKSVAPILVFVLVLSSIANFQVGHSANLRPVLLLYVVGMLLAAFSAVIASLSFPSTLYLNTVSHNNLQAPGSLADILKNLLLSFIANPVQAISEANFIGILAWAIGLGLAMRHSSDTTKQVMQDVSHAVSAIIHKVIAFAPVGIFGLVAVTFADAGLATLESYAQLLVVLLGTMLFVALVINPILVGLTIRGNPYPLVFKCLKESGITAFFTRSSAANIPVNLDLAERLGVNPSTASVSIPLGATVNMAGAAVTITVLTLATVHTLGIHVDLATMIILSVVATISACGASGVAGGSLLLIPVACSLFGISSEIAMQVVAVGMIISVLQDSTETALNSSTDVLFTAAVDIRSRQNS.

9 helical membrane-spanning segments follow: residues 14-34 (IIIAIILGIGVALLFPTVTPY), 48-68 (SVAPILVFVLVLSSIANFQVG), 76-96 (VLLLYVVGMLLAAFSAVIASL), 136-156 (AISEANFIGILAWAIGLGLAM), 177-197 (IIHKVIAFAPVGIFGLVAVTF), 211-231 (LLVVLLGTMLFVALVINPILV), 285-305 (IPLGATVNMAGAAVTITVLTL), 311-331 (LGIHVDLATMIILSVVATISA), and 349-371 (CSLFGISSEIAMQVVAVGMIISV).

Belongs to the dicarboxylate/amino acid:cation symporter (DAACS) (TC 2.A.23) family.

It localises to the cell inner membrane. The enzyme catalyses L-serine(in) + Na(+)(in) = L-serine(out) + Na(+)(out). It carries out the reaction L-threonine(in) + Na(+)(in) = L-threonine(out) + Na(+)(out). Involved in the import of serine and threonine into the cell, with the concomitant import of sodium (symport system). This Acinetobacter baumannii (strain AB307-0294) protein is Serine/threonine transporter SstT.